Reading from the N-terminus, the 157-residue chain is uncharacterized protein (157 aa).

The N-acetyltransferase domain maps to 9-147; the sequence is LLINYKTLDE…DFYVWHPEVN (139 aa).

This is an uncharacterized protein from Bacillus cereus (strain 03BB102).